A 266-amino-acid polypeptide reads, in one-letter code: Hydroxypyruvate/pyruvate aldolase (266 aa).

His-48 serves as the catalytic Proton acceptor. A divalent metal cation is bound by residues Glu-152 and Asp-178.

Belongs to the HpcH/HpaI aldolase family. A divalent metal cation is required as a cofactor.

The catalysed reaction is D-glyceraldehyde + pyruvate = 2-dehydro-3-deoxy-L-galactonate. It catalyses the reaction 2-dehydro-3-deoxy-D-gluconate = D-glyceraldehyde + pyruvate. Functionally, aldolase which can catalyze in vitro the aldolisation reaction between hydroxypyruvate (HPA) or pyruvate (PA) and D-glyceraldehyde (D-GA). The condensation of pyruvate and D-glyceraldehyde produces 2-dehydro-3-deoxy-L-galactonate as the major product and 2-dehydro-3-deoxy-D-gluconate. Has weak activity with hydroxypyruvate and D-glyceraldehyde. The protein is Hydroxypyruvate/pyruvate aldolase of Agrobacterium fabrum (strain C58 / ATCC 33970) (Agrobacterium tumefaciens (strain C58)).